The following is a 1770-amino-acid chain: Vitellogenin (1770 aa).

A signal peptide spans 1–16 (MLLLLTLLLFAGTVAA). The region spanning 22 to 809 (WQVGNEYTYL…SEDSVIPRIL (788 aa)) is the Vitellogenin domain. Cys178 and Cys222 form a disulfide bridge. Asn296 is a glycosylation site (N-linked (GlcNAc...) asparagine). Positions 373-394 (SSSSSISSSEENDFWQPKPTLE) are disordered. A glycan (N-linked (GlcNAc...) asparagine) is linked at Asn1067. The VWFD domain maps to 1442-1635 (TSCMLDKTRA…SYALISNQCE (194 aa)). 2 disulfide bridges follow: Cys1444/Cys1598 and Cys1466/Cys1634.

In terms of tissue distribution, accumulates in the hemolymph. Represents up to 70% of the queen's hemolymph proteins. During the first week of the worker adult life, when it becomes a nurse bee and performs brood-rearing tasks, the vitellogenin titer increases and may account for up to 40% of the total hemolymph proteins.

It localises to the secreted. Precursor of the egg-yolk proteins that are sources of nutrients during embryonic development. Involved in the differentiation of honeybee larvae into queens. The polypeptide is Vitellogenin (Vg) (Apis mellifera (Honeybee)).